The following is a 481-amino-acid chain: Surface lipoprotein assembly modifier 1 (481 aa).

The first 23 residues, 1 to 23 (MSIQTKFILFLSSSLFLTPYSVA), serve as a signal peptide directing secretion. The segment at 25–192 (EKSPQPHDGR…QYLSALNQRD (168 aa)) is N-terminal domain. The interval 193–481 (QWKIQGGFSF…RIYVEISKTF (289 aa)) is C-terminal probable beta barrel. A run of 14 beta stranded transmembrane segments spans residues 194 to 204 (WKIQGGFSFLN), 233 to 243 (SYFGNAEKKWS), 248 to 258 (HFTKLSLEGSG), 271 to 281 (NARAGVGLGYQ), 285 to 295 (FELSLMPFTEK), 315 to 325 (SGARLDLSNWL), 329 to 338 (WQISTALEYG), 353 to 363 (YLASATLLYLA), 368 to 377 (YWFGGADYNR), 390 to 400 (KNVRLGWGQEW), 405 to 414 (STRLILNYAR), 432 to 441 (YASVLTIWHR), 448 to 458 (ITPKLSWSYQK), and 471 to 481 (NRIYVEISKTF).

The protein belongs to the Slam family.

It is found in the cell outer membrane. In terms of biological role, required for correct export to the cell surface of some cell outer membrane lipoproteins. In Haemophilus influenzae (strain ATCC 51907 / DSM 11121 / KW20 / Rd), this protein is Surface lipoprotein assembly modifier 1.